Consider the following 379-residue polypeptide: MSHDTTPPLPATGAWREGDPPGDRRWVELSEPLPLETGGELPGVRLAYETWGSLNEDRSNAVLVLHALTGDSHVVGPEGPGHPSPGWWEGIIGPGLALDTDRYFVVAPNVLGGCQGSTGPSSTAPDGRPWGSRFPRITIRDTVRAEFALLREFGIHSWAAVLGGSMGGMRALEWAATYPERVRRLLLLASPAASSAQQIAWAAPQLHAIRSDPYWHGGDYYDRPGPGPVTGMGIARRIAHITYRGATEFDERFGRNPQDGEDPMAGGRFAVESYLDHHAVKLARRFDAGSYVVLTQAMNTHDVGRGRGGVAQALRRVTARTMVAGVSSDFLYPLAQQQELADGIPGADEVRVIESASGHDGFLTEINQVSVLIKELLAQ.

A disordered region spans residues 1–24 (MSHDTTPPLPATGAWREGDPPGDR). The region spanning 60 to 365 (NAVLVLHALT…ASGHDGFLTE (306 aa)) is the AB hydrolase-1 domain. Ser-165 functions as the Nucleophile in the catalytic mechanism. Arg-236 contributes to the substrate binding site. Catalysis depends on residues Asp-329 and His-359. Asp-360 contributes to the substrate binding site.

It belongs to the AB hydrolase superfamily. MetX family. In terms of assembly, homodimer.

It localises to the cytoplasm. The enzyme catalyses L-homoserine + acetyl-CoA = O-acetyl-L-homoserine + CoA. It functions in the pathway amino-acid biosynthesis; L-methionine biosynthesis via de novo pathway; O-acetyl-L-homoserine from L-homoserine: step 1/1. Functionally, transfers an acetyl group from acetyl-CoA to L-homoserine, forming acetyl-L-homoserine. This is Homoserine O-acetyltransferase from Thermobifida fusca (strain YX).